A 237-amino-acid polypeptide reads, in one-letter code: Uridylate kinase (237 aa).

Position 11-14 (11-14 (KLSG)) interacts with ATP. Position 53 (Gly53) interacts with UMP. ATP-binding residues include Gly54 and Arg58. UMP contacts are provided by residues Asp73 and 134-141 (TGNPFFTT). 3 residues coordinate ATP: Thr161, Tyr167, and Asp170.

The protein belongs to the UMP kinase family. As to quaternary structure, homohexamer.

The protein localises to the cytoplasm. The catalysed reaction is UMP + ATP = UDP + ADP. The protein operates within pyrimidine metabolism; CTP biosynthesis via de novo pathway; UDP from UMP (UMPK route): step 1/1. Its activity is regulated as follows. Inhibited by UTP. Functionally, catalyzes the reversible phosphorylation of UMP to UDP. The polypeptide is Uridylate kinase (Burkholderia mallei (strain NCTC 10247)).